The chain runs to 387 residues: Exodeoxyribonuclease 7 large subunit (387 aa).

This sequence belongs to the XseA family. In terms of assembly, heterooligomer composed of large and small subunits.

Its subcellular location is the cytoplasm. The catalysed reaction is Exonucleolytic cleavage in either 5'- to 3'- or 3'- to 5'-direction to yield nucleoside 5'-phosphates.. Functionally, bidirectionally degrades single-stranded DNA into large acid-insoluble oligonucleotides, which are then degraded further into small acid-soluble oligonucleotides. The chain is Exodeoxyribonuclease 7 large subunit from Synechococcus sp. (strain CC9605).